A 262-amino-acid polypeptide reads, in one-letter code: Thiazole synthase (262 aa).

Residue Lys-104 is the Schiff-base intermediate with DXP of the active site. Residues Gly-165, 191-192, and 213-214 each bind 1-deoxy-D-xylulose 5-phosphate; these read AG and NT.

The protein belongs to the ThiG family. In terms of assembly, homotetramer. Forms heterodimers with either ThiH or ThiS.

It is found in the cytoplasm. The catalysed reaction is [ThiS sulfur-carrier protein]-C-terminal-Gly-aminoethanethioate + 2-iminoacetate + 1-deoxy-D-xylulose 5-phosphate = [ThiS sulfur-carrier protein]-C-terminal Gly-Gly + 2-[(2R,5Z)-2-carboxy-4-methylthiazol-5(2H)-ylidene]ethyl phosphate + 2 H2O + H(+). The protein operates within cofactor biosynthesis; thiamine diphosphate biosynthesis. Catalyzes the rearrangement of 1-deoxy-D-xylulose 5-phosphate (DXP) to produce the thiazole phosphate moiety of thiamine. Sulfur is provided by the thiocarboxylate moiety of the carrier protein ThiS. In vitro, sulfur can be provided by H(2)S. The polypeptide is Thiazole synthase (Nitrosococcus oceani (strain ATCC 19707 / BCRC 17464 / JCM 30415 / NCIMB 11848 / C-107)).